A 262-amino-acid polypeptide reads, in one-letter code: MNDNYMINPKKELSQCFIHSTDITDKIVNYAGNISNFSIIEIGPGLGTMTYSILKKNPKKLISIEKDSRLLPIHDKIIKEFQGKYEFILSDALDIDLRNIAKPPVKVIANLPYSIATLLLIKWINYINFFHSFTLMFQKEVADRIIAQPNNKNYGTLSILTQLFADVYKMQDFGPEIFSPKPKVFSSVINIVVLPQPRFDVNYDKLRKIVKITFNQRRKMIRSTLKQITNNTDEILHSLNIPNNLRPENLSIKQFCDIANCI.

Positions 18, 43, 65, 91, and 110 each coordinate S-adenosyl-L-methionine.

It belongs to the class I-like SAM-binding methyltransferase superfamily. rRNA adenine N(6)-methyltransferase family. RsmA subfamily.

It is found in the cytoplasm. It catalyses the reaction adenosine(1518)/adenosine(1519) in 16S rRNA + 4 S-adenosyl-L-methionine = N(6)-dimethyladenosine(1518)/N(6)-dimethyladenosine(1519) in 16S rRNA + 4 S-adenosyl-L-homocysteine + 4 H(+). Specifically dimethylates two adjacent adenosines (A1518 and A1519) in the loop of a conserved hairpin near the 3'-end of 16S rRNA in the 30S particle. May play a critical role in biogenesis of 30S subunits. The polypeptide is Ribosomal RNA small subunit methyltransferase A (Ehrlichia ruminantium (strain Gardel)).